Here is a 2548-residue protein sequence, read N- to C-terminus: Variant-silencing SET domain-containing protein (2548 aa).

Residues Ile-37–Asn-48 are compositionally biased toward acidic residues. 3 disordered regions span residues Ile-37–Asn-61, Gly-336–Asn-379, and Ser-585–Thr-629. Residues Gly-336–Asp-357 show a composition bias toward basic and acidic residues. Acidic residues predominate over residues Gly-358–Asp-378. Low complexity predominate over residues Asn-602–Asn-616. Polar residues predominate over residues Ile-617 to Thr-629. The segment at Phe-787 to Asp-846 adopts a PHD-type 1 zinc-finger fold. A compositionally biased stretch (basic residues) spans Ile-929–Arg-944. Disordered regions lie at residues Ile-929–Asn-1054, Glu-1546–Asp-1575, Glu-1713–Lys-1732, and Ile-1772–Arg-1822. Acidic residues predominate over residues Asp-986 to Asn-1016. Composition is skewed to low complexity over residues Asn-1017–Asn-1050 and Asn-1551–Asn-1572. The span at Gln-1714–Lys-1732 shows a compositional bias: polar residues. Residues Ser-2067–Phe-2117 enclose the AWS domain. The SET domain maps to Lys-2119–Ser-2240. Tyr-2239 serves as a coordination point for S-adenosyl-L-methionine. A PHD-type 2 zinc finger spans residues Asp-2423–Tyr-2471.

This sequence belongs to the class V-like SAM-binding methyltransferase superfamily.

The protein localises to the nucleus. Its subcellular location is the chromosome. The catalysed reaction is L-lysyl(36)-[histone H3] + 3 S-adenosyl-L-methionine = N(6),N(6),N(6)-trimethyl-L-lysyl(36)-[histone H3] + 3 S-adenosyl-L-homocysteine + 3 H(+). Histone methyltransferase that specifically represses expression of the surface antigen-coding var genes by mediating trimethylation of 'Lys-36' of histone H3 (H3K36me3) on var genes. SETVS-dependent H3K36me3 is specifically involved in var genes silencing, a central step malaria pathogenesis: each parasite contains 60 distinct var genes that each code for a different PfEMP1 protein. During infection, the clonal parasite population expresses only 1 gene at a time, while the 59 other var genes are silenced. The parasite then switches to the expression of a new variant antigen as an immune-evasion mechanism to avoid the host antibody response. Represses expression of both var mRNA and antisense long non-coding RNA. The protein is Variant-silencing SET domain-containing protein (SETVS) of Plasmodium falciparum (isolate 3D7).